A 98-amino-acid polypeptide reads, in one-letter code: Putative membrane protein insertion efficiency factor (98 aa).

The protein belongs to the UPF0161 family.

The protein localises to the cell inner membrane. Could be involved in insertion of integral membrane proteins into the membrane. This Cupriavidus pinatubonensis (strain JMP 134 / LMG 1197) (Cupriavidus necator (strain JMP 134)) protein is Putative membrane protein insertion efficiency factor.